A 453-amino-acid chain; its full sequence is GTPase Der (453 aa).

2 EngA-type G domains span residues 4–169 and 177–352; these read PIVA…PTQG and TKIA…NEYQ. Residues 10–17, 57–61, 120–123, 183–190, 230–234, and 295–298 each bind GTP; these read GRPNVGKS, DTGGL, NKCE, DTAGI, and NKWD. The KH-like domain occupies 353-438; the sequence is RRVTTSVINE…PIRLLWRGKK (86 aa).

Belongs to the TRAFAC class TrmE-Era-EngA-EngB-Septin-like GTPase superfamily. EngA (Der) GTPase family. In terms of assembly, associates with the 50S ribosomal subunit.

GTPase that plays an essential role in the late steps of ribosome biogenesis. In Trichodesmium erythraeum (strain IMS101), this protein is GTPase Der.